Here is a 560-residue protein sequence, read N- to C-terminus: Radial spoke head protein 3 homolog (560 aa).

Disordered stretches follow at residues 134 to 186 (RKRG…EEPM) and 225 to 249 (ARKR…PVEG). Positions 153 to 162 (RAPSTYTYTS) are enriched in polar residues. Residues 215-239 (DSLELQRQREARKRALARKQAQEQL) are a coiled coil. Phosphothreonine; by MAPK1 is present on T286. Positions 331–385 (LEVMEEEELANLRASQREYEELRNSERAEVQRLEEQERRHREEKERRKKQQWEIM) form a coiled coil. 3 disordered regions span residues 354–375 (NSER…EEKE), 473–498 (HGED…ESLE), and 526–560 (DRRS…EELS).

It belongs to the flagellar radial spoke RSP3 family. As to quaternary structure, component of the axonemal radial spoke 1 (RS1) and 2 (RS2) complexes, at least composed of spoke head proteins RSPH1, RSPH3, RSPH9 and the cilia-specific component RSPH4A or sperm-specific component RSPH6A, spoke stalk proteins RSPH14, DNAJB13, DYDC1, ROPN1L and NME5, and the RS1 complex-specific anchor protein IQUB. Interacts with IQUB. Interacts with phosphorylated MAPK1. Interacts with MEK1. Interacts with PKA regulatory subunits PRKAR1A and PRKAR1B. Interacts with RSPH1. Interacts with RSPH4A. Interacts with RSPH6A. Interacts with RSPH9. Interacts with LRRC23.

The protein resides in the cytoplasm. It is found in the cytoskeleton. The protein localises to the cilium axoneme. Its subcellular location is the flagellum axoneme. Functionally, functions as part of axonemal radial spoke complexes that play an important part in the motility of sperm and cilia. Functions as a protein kinase A-anchoring protein that scaffolds the cAMP-dependent protein kinase holoenzyme. May serve as a point of convergence for MAPK and PKA signaling in cilia. This is Radial spoke head protein 3 homolog (RSPH3) from Homo sapiens (Human).